The chain runs to 469 residues: MSQEDITGKDRLQELIGADYRLQWIIGHGGMSTVWLADDVVNDREVAIKVLRPEFSDNQEFLNRFRNEAQAAENIDSEHVVATYDYREVPDPAGHTFCFIVMEFVRGESLADLLEREGRLPEDLALDVMEQAAHGLSVIHRMDMVHRDIKPGNMLITANGIVKITDFGIAKAAAAVPLTRTGMVVGTAQYVSPEQAQGKEVTAASDIYSLGVVGYEMMAGRRPFTGDSSVSVAIAHINQAPPQMPTSISAQTRELIGIALRKDPGRRFPDGNEMALAVSAVRLGKRPPQPRTSAMMAQAEAPSPSESTAMLGRVARPATITQEAAPKRGSGIGIGLFIAALLAVIIGAVIYAGTTGILFNDTPEETTTPETITETYTPTVEETTSQWVPPTPPTRSTFTEPETTSHRPTTSEESTSEEPTTEAPTSSRTVPQIPTSTPRTSASVPVETNAPADDLIDAVNGLLDVGGAQ.

Positions 20–281 constitute a Protein kinase domain; sequence YRLQWIIGHG…NEMALAVSAV (262 aa). Residues 26–34 and lysine 49 contribute to the ATP site; that span reads IGHGGMSTV. Residue aspartate 148 is the Proton acceptor of the active site. Disordered stretches follow at residues 286–307 and 359–454; these read RPPQPRTSAMMAQAEAPSPSES and FNDT…PADD. Low complexity-rich tracts occupy residues 365–384 and 399–413; these read ETTTPETITETYTPTVEETT and TEPETTSHRPTTSEE. Polar residues predominate over residues 430 to 443; that stretch reads VPQIPTSTPRTSAS.

It belongs to the protein kinase superfamily. Ser/Thr protein kinase family.

It carries out the reaction L-seryl-[protein] + ATP = O-phospho-L-seryl-[protein] + ADP + H(+). The enzyme catalyses L-threonyl-[protein] + ATP = O-phospho-L-threonyl-[protein] + ADP + H(+). This Corynebacterium glutamicum (strain ATCC 13032 / DSM 20300 / JCM 1318 / BCRC 11384 / CCUG 27702 / LMG 3730 / NBRC 12168 / NCIMB 10025 / NRRL B-2784 / 534) protein is Serine/threonine-protein kinases PknA (pknA).